The sequence spans 225 residues: Heptaprenylglyceryl phosphate synthase (225 aa).

Residue Lys6 coordinates sn-glycerol 1-phosphate. Asp8 and Thr34 together coordinate Mg(2+). Sn-glycerol 1-phosphate contacts are provided by residues 153–158 (YVEYSG), Gly183, and 203–204 (GN).

Belongs to the GGGP/HepGP synthase family. Group I subfamily. As to quaternary structure, homodimer. Mg(2+) is required as a cofactor.

It carries out the reaction sn-glycerol 1-phosphate + all-trans-heptaprenyl diphosphate = 3-heptaprenyl-sn-glycero-1-phosphate + diphosphate. It functions in the pathway membrane lipid metabolism; glycerophospholipid metabolism. Prenyltransferase that catalyzes in vivo the transfer of the heptaprenyl moiety of heptaprenyl pyrophosphate (HepPP; 35 carbon atoms) to the C3 hydroxyl of sn-glycerol-1-phosphate (G1P), producing heptaprenylglyceryl phosphate (HepGP). This reaction is an ether-bond-formation step in the biosynthesis of archaea-type G1P-based membrane lipids found in Bacillales. In Listeria monocytogenes serotype 4a (strain HCC23), this protein is Heptaprenylglyceryl phosphate synthase.